Reading from the N-terminus, the 236-residue chain is Ribose-5-phosphate isomerase A (236 aa).

Residues 31 to 34, 88 to 91, and 101 to 104 contribute to the substrate site; these read TGST, DGAD, and KGGG. E110 functions as the Proton acceptor in the catalytic mechanism. K128 lines the substrate pocket.

This sequence belongs to the ribose 5-phosphate isomerase family. Homodimer.

It catalyses the reaction aldehydo-D-ribose 5-phosphate = D-ribulose 5-phosphate. It participates in carbohydrate degradation; pentose phosphate pathway; D-ribose 5-phosphate from D-ribulose 5-phosphate (non-oxidative stage): step 1/1. Catalyzes the reversible conversion of ribose-5-phosphate to ribulose 5-phosphate. The protein is Ribose-5-phosphate isomerase A of Thermosynechococcus vestitus (strain NIES-2133 / IAM M-273 / BP-1).